The primary structure comprises 946 residues: Protein translocase subunit SecA (946 aa).

Residues glutamine 87, 105 to 109 (GEGKT), and aspartate 524 contribute to the ATP site. Residues 905-926 (APASDAAQRDPKNPASWGKIGR) form a disordered region. Residues cysteine 930, cysteine 932, cysteine 941, and histidine 942 each contribute to the Zn(2+) site.

It belongs to the SecA family. Monomer and homodimer. Part of the essential Sec protein translocation apparatus which comprises SecA, SecYEG and auxiliary proteins SecDF-YajC and YidC. Zn(2+) serves as cofactor.

It localises to the cell inner membrane. It is found in the cytoplasm. The enzyme catalyses ATP + H2O + cellular proteinSide 1 = ADP + phosphate + cellular proteinSide 2.. Its function is as follows. Part of the Sec protein translocase complex. Interacts with the SecYEG preprotein conducting channel. Has a central role in coupling the hydrolysis of ATP to the transfer of proteins into and across the cell membrane, serving both as a receptor for the preprotein-SecB complex and as an ATP-driven molecular motor driving the stepwise translocation of polypeptide chains across the membrane. The protein is Protein translocase subunit SecA of Bradyrhizobium diazoefficiens (strain JCM 10833 / BCRC 13528 / IAM 13628 / NBRC 14792 / USDA 110).